A 477-amino-acid chain; its full sequence is Sucrose-6-phosphate hydrolase (477 aa).

Residues 36–39, Gln-55, Trp-63, 98–99, 160–161, Glu-215, and Trp-298 each bind substrate; these read WMND, FS, and RD. The active site involves Asp-39.

The protein belongs to the glycosyl hydrolase 32 family.

The protein localises to the cytoplasm. It carries out the reaction Hydrolysis of terminal non-reducing beta-D-fructofuranoside residues in beta-D-fructofuranosides.. It participates in glycan biosynthesis; sucrose metabolism. Functionally, enables the bacterium to metabolize sucrose as a sole carbon source. The chain is Sucrose-6-phosphate hydrolase (cscA) from Escherichia coli.